Consider the following 484-residue polypeptide: Transcription factor TGAL4 (484 aa).

Residues 1-11 (MGEASSSSGHP) are compositionally biased toward polar residues. Disordered stretches follow at residues 1-22 (MGEA…GYGF), 84-137 (ATAA…NASS), and 155-181 (QQEQ…DPKT). A compositionally biased stretch (low complexity) spans 123–137 (SESSSKNNSNQNASS). Over residues 163-173 (ATNSPTHSSKT) the composition is skewed to polar residues. The bZIP domain maps to 178-222 (DPKTMRRLAQNREAARKSRLRKKAYIQQLESSKLKLAQMEQDIHR). The interval 180-200 (KTMRRLAQNREAARKSRLRKK) is basic motif. The tract at residues 206-220 (LESSKLKLAQMEQDI) is leucine-zipper. In terms of domain architecture, DOG1 spans 241 to 455 (AAMFDVDYAR…RALSSLWASR (215 aa)).

This sequence belongs to the bZIP family. As to quaternary structure, interacts with NPR1/NH1 and NPR3/NH3.

It is found in the nucleus. Its function is as follows. Transcriptional regulator involved in defense response. This Oryza sativa subsp. japonica (Rice) protein is Transcription factor TGAL4.